The chain runs to 460 residues: Bifunctional protein GlmU (460 aa).

The pyrophosphorylase stretch occupies residues M1 to L228. Residues L8–G11, K22, Q72, and G77–T78 contribute to the UDP-N-acetyl-alpha-D-glucosamine site. Residue D102 participates in Mg(2+) binding. Positions 139, 154, 169, and 226 each coordinate UDP-N-acetyl-alpha-D-glucosamine. Residue N226 coordinates Mg(2+). Residues Y229–N249 are linker. The interval G250–E460 is N-acetyltransferase. UDP-N-acetyl-alpha-D-glucosamine contacts are provided by R331 and K349. H361 serves as the catalytic Proton acceptor. Residues Y364 and N375 each contribute to the UDP-N-acetyl-alpha-D-glucosamine site. Residues N384–Y385, A421, and R438 each bind acetyl-CoA.

It in the N-terminal section; belongs to the N-acetylglucosamine-1-phosphate uridyltransferase family. The protein in the C-terminal section; belongs to the transferase hexapeptide repeat family. In terms of assembly, homotrimer. It depends on Mg(2+) as a cofactor.

It localises to the cytoplasm. The enzyme catalyses alpha-D-glucosamine 1-phosphate + acetyl-CoA = N-acetyl-alpha-D-glucosamine 1-phosphate + CoA + H(+). It carries out the reaction N-acetyl-alpha-D-glucosamine 1-phosphate + UTP + H(+) = UDP-N-acetyl-alpha-D-glucosamine + diphosphate. Its pathway is nucleotide-sugar biosynthesis; UDP-N-acetyl-alpha-D-glucosamine biosynthesis; N-acetyl-alpha-D-glucosamine 1-phosphate from alpha-D-glucosamine 6-phosphate (route II): step 2/2. It functions in the pathway nucleotide-sugar biosynthesis; UDP-N-acetyl-alpha-D-glucosamine biosynthesis; UDP-N-acetyl-alpha-D-glucosamine from N-acetyl-alpha-D-glucosamine 1-phosphate: step 1/1. The protein operates within bacterial outer membrane biogenesis; LPS lipid A biosynthesis. Functionally, catalyzes the last two sequential reactions in the de novo biosynthetic pathway for UDP-N-acetylglucosamine (UDP-GlcNAc). The C-terminal domain catalyzes the transfer of acetyl group from acetyl coenzyme A to glucosamine-1-phosphate (GlcN-1-P) to produce N-acetylglucosamine-1-phosphate (GlcNAc-1-P), which is converted into UDP-GlcNAc by the transfer of uridine 5-monophosphate (from uridine 5-triphosphate), a reaction catalyzed by the N-terminal domain. This chain is Bifunctional protein GlmU, found in Acholeplasma laidlawii (strain PG-8A).